A 277-amino-acid polypeptide reads, in one-letter code: Small ribosomal subunit protein uS2 (277 aa).

The disordered stretch occupies residues 254-277 (LAGAGSSALNDSGADLSEANPTEA).

Belongs to the universal ribosomal protein uS2 family.

This Mycobacterium leprae (strain TN) protein is Small ribosomal subunit protein uS2 (rpsB).